A 405-amino-acid chain; its full sequence is L-rhamnonate dehydratase (405 aa).

2 residues coordinate substrate: His-33 and Arg-59. Mg(2+)-binding residues include Asp-226, Glu-252, and Glu-280. The Proton acceptor role is filled by His-329. Glu-349 serves as a coordination point for substrate.

It belongs to the mandelate racemase/muconate lactonizing enzyme family. RhamD subfamily. In terms of assembly, homooctamer; tetramer of dimers. The cofactor is Mg(2+).

It carries out the reaction L-rhamnonate = 2-dehydro-3-deoxy-L-rhamnonate + H2O. Catalyzes the dehydration of L-rhamnonate to 2-keto-3-deoxy-L-rhamnonate (KDR). The protein is L-rhamnonate dehydratase of Escherichia coli O81 (strain ED1a).